Consider the following 311-residue polypeptide: Glycine-betaine-binding protein (311 aa).

An N-terminal signal peptide occupies residues 1-23; sequence MNRLIRSLCLACAGLFAAGLAQA.

This sequence belongs to the OsmX family.

The protein resides in the periplasm. Binds glycine-betaine. The chain is Glycine-betaine-binding protein from Pseudomonas aeruginosa (strain ATCC 15692 / DSM 22644 / CIP 104116 / JCM 14847 / LMG 12228 / 1C / PRS 101 / PAO1).